The following is a 329-amino-acid chain: NADH-quinone oxidoreductase subunit H (329 aa).

A run of 9 helical transmembrane segments spans residues 9–29 (LIKI…ATYI), 42–62 (GPCY…IKLF), 75–95 (FIFT…MAPI), 117–137 (IGFL…ILAG), 154–174 (IQLL…LMVV), 188–208 (GGFL…FLIA), 238–258 (LKWG…SFVI), 269–291 (WGFI…LSMW), and 309–329 (WKIM…IILI).

The protein belongs to the complex I subunit 1 family. In terms of assembly, NDH-1 is composed of 14 different subunits. Subunits NuoA, H, J, K, L, M, N constitute the membrane sector of the complex.

The protein localises to the cell inner membrane. The enzyme catalyses a quinone + NADH + 5 H(+)(in) = a quinol + NAD(+) + 4 H(+)(out). Functionally, NDH-1 shuttles electrons from NADH, via FMN and iron-sulfur (Fe-S) centers, to quinones in the respiratory chain. The immediate electron acceptor for the enzyme in this species is believed to be ubiquinone. Couples the redox reaction to proton translocation (for every two electrons transferred, four hydrogen ions are translocated across the cytoplasmic membrane), and thus conserves the redox energy in a proton gradient. This subunit may bind ubiquinone. The protein is NADH-quinone oxidoreductase subunit H of Helicobacter pylori (strain ATCC 700392 / 26695) (Campylobacter pylori).